The chain runs to 2879 residues: Peramine synthetase ppzA (2879 aa).

The span at 1 to 12 (MTYDEGGHRNNE) shows a compositional bias: basic and acidic residues. The disordered stretch occupies residues 1-52 (MTYDEGGHRNNEETPQDVNMSSNNEGMSTSSPTGSYGEIIGQATVSVPQEDQ). Residues 16–34 (QDVNMSSNNEGMSTSSPTG) are compositionally biased toward polar residues. The adenylation 1 stretch occupies residues 351–747 (QEQCRLQPNT…VGRKDTQVKI (397 aa)). Residues 882 to 958 (QPLSDMERLL…DLSRQSKYIE (77 aa)) form the Carrier 1 domain. Ser919 is subject to O-(pantetheine 4'-phosphoryl)serine. The segment at 997 to 1410 (DAYPCTPLQE…ITILTTEDLE (414 aa)) is condensation. Residues 1433–1827 (DKVQHRPNAP…LSFVRRKDTT (395 aa)) are adenylation 2. Positions 1958–2050 (LEIGCGSGMM…KYLVKLIQDI (93 aa)) are methylation (Met) domain. In terms of domain architecture, Carrier 2 spans 2370-2448 (WPTTDTGKEL…RLLLDCCCDD (79 aa)). The residue at position 2407 (Ser2407) is an O-(pantetheine 4'-phosphoryl)serine. The interval 2500 to 2817 (TVLLTGANGF…LEDMLQDLDD (318 aa)) is thiesterase (TE) domain.

Belongs to the NRP synthetase family. Requires pantetheine 4'-phosphate as cofactor.

It carries out the reaction (S)-1-pyrroline-5-carboxylate + L-arginine + S-adenosyl-L-methionine + 2 ATP = peramine + 2 AMP + S-adenosyl-L-homocysteine + 2 diphosphate + H2O + 2 H(+). Its pathway is secondary metabolite biosynthesis. Functionally, nonribosomal peptide synthetase; part of the gene cluster that mediates the biosynthesis of pyrrolopyrazines, secondary metabolites showing insecticidal activity. The single multifunctional NRPS ppzA is responsible for the biosynthesis of peramine. The condensation domain of ppzA is proposed to catalyze formation of a peptide bond between 1-pyrroline-5-carboxylate and arginine. The methylation domain of ppzA would catalyze the N-methylation of the alpha-amino group of arginine. The reductase domain is proposed to be responsible for reduction of the thioester and the cyclization to form an iminium ion resulting in release from the peptide synthetase. Deprotonation of this intermediate and oxidation of the pyrroline ring would give rise to peramine. This final oxidation to give the pyrrole functionality may be spontaneous. In Epichloe species that produce only peramine, the peramine synthetase gene is not localized in a gene cluster, in contrast to Metarhizium species that contain additional pyrrolopyrazine biosynthesis genes. The 2-oxoglutarate-Fe(II) type oxidoreductase ppzC hydroxylates peramine to yield the newly identified compound 8-hydroxyperamine whereas ppzD converts L-proline into trans-4-hydroxy-L-proline, a precursor of peramine biosynthesis. The protein is Peramine synthetase ppzA of Metarhizium rileyi (strain RCEF 4871) (Nomuraea rileyi).